The following is a 427-amino-acid chain: Tol-Pal system protein TolB (427 aa).

The first 23 residues, 1–23, serve as a signal peptide directing secretion; it reads MKLLKRLVSVFAIVLAVGSNAFA.

The protein belongs to the TolB family. The Tol-Pal system is composed of five core proteins: the inner membrane proteins TolA, TolQ and TolR, the periplasmic protein TolB and the outer membrane protein Pal. They form a network linking the inner and outer membranes and the peptidoglycan layer.

The protein resides in the periplasm. In terms of biological role, part of the Tol-Pal system, which plays a role in outer membrane invagination during cell division and is important for maintaining outer membrane integrity. In Haemophilus influenzae (strain 86-028NP), this protein is Tol-Pal system protein TolB.